The following is a 449-amino-acid chain: Xylose isomerase (449 aa).

Residues His-103 and Asp-106 contribute to the active site. The Mg(2+) site is built by Glu-234, Glu-270, His-273, Asp-298, Asp-309, Asp-311, and Asp-342.

Belongs to the xylose isomerase family. Homotetramer. Mg(2+) is required as a cofactor.

The protein localises to the cytoplasm. It carries out the reaction alpha-D-xylose = alpha-D-xylulofuranose. In terms of biological role, involved in D-xylose catabolism. The polypeptide is Xylose isomerase (xylA) (Lactiplantibacillus pentosus (Lactobacillus pentosus)).